We begin with the raw amino-acid sequence, 342 residues long: Biotin synthase (342 aa).

Residues proline 63–arginine 288 enclose the Radical SAM core domain. [4Fe-4S] cluster is bound by residues cysteine 78, cysteine 82, and cysteine 85. Residues cysteine 121, cysteine 154, cysteine 213, and arginine 283 each coordinate [2Fe-2S] cluster.

Belongs to the radical SAM superfamily. Biotin synthase family. Homodimer. The cofactor is [4Fe-4S] cluster. It depends on [2Fe-2S] cluster as a cofactor.

The catalysed reaction is (4R,5S)-dethiobiotin + (sulfur carrier)-SH + 2 reduced [2Fe-2S]-[ferredoxin] + 2 S-adenosyl-L-methionine = (sulfur carrier)-H + biotin + 2 5'-deoxyadenosine + 2 L-methionine + 2 oxidized [2Fe-2S]-[ferredoxin]. It participates in cofactor biosynthesis; biotin biosynthesis; biotin from 7,8-diaminononanoate: step 2/2. Catalyzes the conversion of dethiobiotin (DTB) to biotin by the insertion of a sulfur atom into dethiobiotin via a radical-based mechanism. In Mycobacteroides abscessus (strain ATCC 19977 / DSM 44196 / CCUG 20993 / CIP 104536 / JCM 13569 / NCTC 13031 / TMC 1543 / L948) (Mycobacterium abscessus), this protein is Biotin synthase.